The primary structure comprises 673 residues: Citrate exporter 1 (673 aa).

Residues 1–44 (MFNLNTKSSKEPEVTEVAVDSTPSSPVTRESSPESSPDNSAVDL) form a disordered region. The span at 21–39 (STPSSPVTRESSPESSPDN) shows a compositional bias: polar residues. The chain crosses the membrane as a helical span at residues 67–87 (FLVFGAMAFCMLVSFMDQNGI). A glycan (N-linked (GlcNAc...) asparagine) is linked at N99. 4 consecutive transmembrane segments (helical) span residues 103-123 (TISWAGTSGLIANTVFQVLYG), 133-153 (LVFMIVVCTLVCADIGCACAQ), 164-184 (FSGIANGGMSCLTMIVVSDIV), and 194-214 (GILGACVGLGNTIGPFLGAAF). N217 is a glycosylation site (N-linked (GlcNAc...) asparagine). Helical transmembrane passes span 222–242 (AIFYLLAPMGGLCAVVIFFIL), 261–281 (PGLFCSSVALVFLLVPIAGGG), 292–312 (ISMLCIGGVFFIAFFVIEGFF), 322–342 (IFGTKALFALMMHSVLLGIAY), 364–384 (AAGMSCALVTTQAVTTVISGQ), 393–413 (LEVIYFGFGIWTVGAIMKCFW), 419–439 (MALLIFSLLFEGAGVGCCFQP), and 465–485 (SFGGAVGLAVCSAILANSLKA). The N-linked (GlcNAc...) asparagine glycan is linked to N526. The chain crosses the membrane as a helical span at residues 529 to 549 (HTVFVFLCPIVGACLLVTVFV). Over residues 564–596 (AKTVEDKDKDESGTDCEDMTKGEVLVSEKEGKL) the composition is skewed to basic and acidic residues. 2 disordered regions span residues 564-608 (AKTV…MHFG) and 636-673 (FPPMDHNDVITPLEDFDESPLPPHSPNSSGKRVTIQEE). N599 and N662 each carry an N-linked (GlcNAc...) asparagine glycan.

The protein belongs to the major facilitator superfamily.

The protein localises to the cell membrane. It catalyses the reaction citrate(in) = citrate(out). Transmembrane transporter that exports citrate across the cell membrane. This chain is Citrate exporter 1, found in Yarrowia lipolytica (strain CLIB 122 / E 150) (Yeast).